A 215-amino-acid chain; its full sequence is Cytidylate kinase (215 aa).

10–18 (GPAASGKGT) provides a ligand contact to ATP.

It belongs to the cytidylate kinase family. Type 1 subfamily.

The protein resides in the cytoplasm. It carries out the reaction CMP + ATP = CDP + ADP. The catalysed reaction is dCMP + ATP = dCDP + ADP. In Bartonella bacilliformis (strain ATCC 35685 / KC583 / Herrer 020/F12,63), this protein is Cytidylate kinase.